Here is a 328-residue protein sequence, read N- to C-terminus: Malate dehydrogenase (328 aa).

Residue 11 to 17 (GAAGQIG) participates in NAD(+) binding. The substrate site is built by R94 and R100. NAD(+)-binding positions include N107, Q114, and 131-133 (VGN). Residues N133 and R164 each contribute to the substrate site. H189 functions as the Proton acceptor in the catalytic mechanism.

The protein belongs to the LDH/MDH superfamily. MDH type 2 family.

The catalysed reaction is (S)-malate + NAD(+) = oxaloacetate + NADH + H(+). In terms of biological role, catalyzes the reversible oxidation of malate to oxaloacetate. The protein is Malate dehydrogenase of Xanthomonas oryzae pv. oryzae (strain PXO99A).